The following is a 284-amino-acid chain: RNase adapter protein RapZ (284 aa).

Gly8–Ser15 contributes to the ATP binding site. Asp56–Asn59 is a GTP binding site. Residues Arg266–Thr284 are RNA-binding.

Belongs to the RapZ-like family. RapZ subfamily. Homotrimer.

Functionally, modulates the synthesis of GlmS, by affecting the processing and stability of the regulatory small RNA GlmZ. When glucosamine-6-phosphate (GlcN6P) concentrations are high in the cell, RapZ binds GlmZ and targets it to cleavage by RNase E. Consequently, GlmZ is inactivated and unable to activate GlmS synthesis. Under low GlcN6P concentrations, RapZ is sequestered and inactivated by an other regulatory small RNA, GlmY, preventing GlmZ degradation and leading to synthesis of GlmS. In Salmonella arizonae (strain ATCC BAA-731 / CDC346-86 / RSK2980), this protein is RNase adapter protein RapZ.